A 125-amino-acid polypeptide reads, in one-letter code: MARIASVNIPDNKRVVVSLTYIYGLGPTMAAEICNKAKISKDKKVKELTDQELIGLRNIIESEYKVEGDLRREVTLNIKKKKDIRCYQGLRHIRKLPVRGQNTHSNARTRKGKAIAIAGKKKAVK.

This sequence belongs to the universal ribosomal protein uS13 family. Part of the 30S ribosomal subunit. Forms a loose heterodimer with protein S19. Forms two bridges to the 50S subunit in the 70S ribosome.

Located at the top of the head of the 30S subunit, it contacts several helices of the 16S rRNA. In the 70S ribosome it contacts the 23S rRNA (bridge B1a) and protein L5 of the 50S subunit (bridge B1b), connecting the 2 subunits; these bridges are implicated in subunit movement. Contacts the tRNAs in the A and P-sites. This is Small ribosomal subunit protein uS13 from Rickettsia rickettsii (strain Iowa).